Here is a 99-residue protein sequence, read N- to C-terminus: uncharacterized protein (99 aa).

Disordered stretches follow at residues 1–24 and 49–99; these read MKATRRTRVASERGVRRRRRVRAT and SVRT…RCAT. 2 stretches are compositionally biased toward basic residues: residues 15–24 and 71–81; these read VRRRRRVRAT and SRRRGRPRSSR.

This is an uncharacterized protein from Streptomyces fradiae (Streptomyces roseoflavus).